Consider the following 653-residue polypeptide: Beta-galactosidase (653 aa).

Residues 1-22 (MPGVVRLLALLLVPLLLGSARG) form the signal peptide. The propeptide occupies 23–27 (LHNAT). N-linked (GlcNAc...) asparagine glycosylation occurs at N25. Position 82 (Y82) interacts with substrate. A glycan (N-linked (GlcNAc...) asparagine) is linked at N96. Substrate contacts are provided by E128 and N186. Residue E187 is the Proton donor of the active site. C194 and C229 are oxidised to a cystine. N246 is a glycosylation site (N-linked (GlcNAc...) asparagine). E267 (nucleophile) is an active-site residue. Residue Y332 coordinates substrate. 3 N-linked (GlcNAc...) asparagine glycosylation sites follow: N463, N497, and N554. C625 and C633 form a disulfide bridge.

This sequence belongs to the glycosyl hydrolase 35 family. In terms of assembly, homodimer. May form higher multimers.

Its subcellular location is the lysosome. It carries out the reaction Hydrolysis of terminal non-reducing beta-D-galactose residues in beta-D-galactosides.. Cleaves beta-linked terminal galactosyl residues from gangliosides, glycoproteins, and glycosaminoglycans. The polypeptide is Beta-galactosidase (GLB1) (Bos taurus (Bovine)).